Here is a 742-residue protein sequence, read N- to C-terminus: Photosystem I P700 chlorophyll a apoprotein A2 (742 aa).

8 helical membrane passes run 46–69, 135–158, 175–199, 273–291, 336–359, 375–401, 423–445, and 525–543; these read LFST…FHIA, LFQA…LHLQ, LNHH…HVAI, IAHH…GHMY, LHFQ…QHMG, SALY…IFFV, ALIS…IYVH, and FLVH…LILI. Residues Cys567 and Cys576 each contribute to the [4Fe-4S] cluster site. The next 2 membrane-spanning stretches (helical) occupy residues 583-604 and 651-673; these read AMYL…YWHW and LSPW…MFLI. The divinyl chlorophyll a site is built by His662, Met670, and Tyr678. Position 679 (Trp679) interacts with phylloquinone. The chain crosses the membrane as a helical span at residues 715–735; the sequence is LVGLAHFTIGNILTFGAFVIA.

This sequence belongs to the PsaA/PsaB family. In terms of assembly, the PsaA/B heterodimer binds the P700 divinyl chlorophyll special pair and subsequent electron acceptors. PSI consists of a core antenna complex that captures photons, and an electron transfer chain that converts photonic excitation into a charge separation. The cyanobacterial PSI reaction center is composed of one copy each of PsaA,B,C,D,E,F,I,J,K,L,M and X, and forms trimeric complexes. PSI electron transfer chain: 5 divinyl chlorophyll a, 1 divinyl chlorophyll a', 2 phylloquinones and 3 4Fe-4S clusters. PSI core antenna: 90 divinyl chlorophyll a, 22 carotenoids, 3 phospholipids and 1 galactolipid. P700 is a divinyl chlorophyll a/divinyl chlorophyll a' dimer, A0 is one or more divinyl chlorophyll a, A1 is one or both phylloquinones and FX is a shared 4Fe-4S iron-sulfur center. is required as a cofactor.

Its subcellular location is the cellular thylakoid membrane. It catalyses the reaction reduced [plastocyanin] + hnu + oxidized [2Fe-2S]-[ferredoxin] = oxidized [plastocyanin] + reduced [2Fe-2S]-[ferredoxin]. Its function is as follows. PsaA and PsaB bind P700, the primary electron donor of photosystem I (PSI), as well as the electron acceptors A0, A1 and FX. PSI is a plastocyanin/cytochrome c6-ferredoxin oxidoreductase, converting photonic excitation into a charge separation, which transfers an electron from the donor P700 chlorophyll pair to the spectroscopically characterized acceptors A0, A1, FX, FA and FB in turn. Oxidized P700 is reduced on the lumenal side of the thylakoid membrane by plastocyanin or cytochrome c6. The chain is Photosystem I P700 chlorophyll a apoprotein A2 from Prochlorococcus marinus (strain MIT 9301).